Consider the following 261-residue polypeptide: Small ribosomal subunit protein uS2 (261 aa).

Ser-2 carries the post-translational modification N-acetylserine. A disordered region spans residues 214–261 (ATEDIKTDDVEEAPAADAETEWTGETEEVDWAESGATPAAEEAAASNW). A compositionally biased stretch (acidic residues) spans 222 to 244 (DVEEAPAADAETEWTGETEEVDW). The segment covering 245–261 (AESGATPAAEEAAASNW) has biased composition (low complexity).

This sequence belongs to the universal ribosomal protein uS2 family. Component of the small ribosomal subunit. Mature ribosomes consist of a small (40S) and a large (60S) subunit. The 40S subunit contains about 33 different proteins and 1 molecule of RNA (18S). The 60S subunit contains about 49 different proteins and 3 molecules of RNA (25S, 5.8S and 5S). Interacts with RPS21.

It is found in the cytoplasm. Its function is as follows. Required for the assembly and/or stability of the 40S ribosomal subunit. Required for the processing of the 20S rRNA-precursor to mature 18S rRNA in a late step of the maturation of 40S ribosomal subunits. This chain is Small ribosomal subunit protein uS2, found in Debaryomyces hansenii (strain ATCC 36239 / CBS 767 / BCRC 21394 / JCM 1990 / NBRC 0083 / IGC 2968) (Yeast).